We begin with the raw amino-acid sequence, 249 residues long: ATP synthase subunit a, chloroplastic (249 aa).

5 helical membrane-spanning segments follow: residues Q40 to V60, V97 to L117, I136 to S156, L201 to L221, and G222 to G242.

Belongs to the ATPase A chain family. In terms of assembly, F-type ATPases have 2 components, CF(1) - the catalytic core - and CF(0) - the membrane proton channel. CF(1) has five subunits: alpha(3), beta(3), gamma(1), delta(1), epsilon(1). CF(0) has four main subunits: a, b, b' and c.

It is found in the plastid. Its subcellular location is the chloroplast thylakoid membrane. Key component of the proton channel; it plays a direct role in the translocation of protons across the membrane. This Draba nemorosa (Woodland whitlowgrass) protein is ATP synthase subunit a, chloroplastic.